Here is a 226-residue protein sequence, read N- to C-terminus: tRNA (guanine-N(7)-)-methyltransferase (226 aa).

Residues 1 to 21 (MTHPQQPHGPLRSFGRLKSRP) are disordered. Residues glutamate 59, glutamate 84, aspartate 111, and aspartate 133 each coordinate S-adenosyl-L-methionine. Aspartate 133 is an active-site residue. Lysine 137 contributes to the substrate binding site. The segment at 139-144 (RHNKRR) is interaction with RNA. Substrate is bound by residues aspartate 169 and 206 to 209 (TRYE).

The protein belongs to the class I-like SAM-binding methyltransferase superfamily. TrmB family.

It catalyses the reaction guanosine(46) in tRNA + S-adenosyl-L-methionine = N(7)-methylguanosine(46) in tRNA + S-adenosyl-L-homocysteine. The protein operates within tRNA modification; N(7)-methylguanine-tRNA biosynthesis. Catalyzes the formation of N(7)-methylguanine at position 46 (m7G46) in tRNA. This is tRNA (guanine-N(7)-)-methyltransferase from Caulobacter sp. (strain K31).